A 192-amino-acid chain; its full sequence is Fe/S biogenesis protein NfuA (192 aa).

2 residues coordinate [4Fe-4S] cluster: cysteine 149 and cysteine 152.

Belongs to the NfuA family. In terms of assembly, homodimer. [4Fe-4S] cluster serves as cofactor.

Functionally, involved in iron-sulfur cluster biogenesis. Binds a 4Fe-4S cluster, can transfer this cluster to apoproteins, and thereby intervenes in the maturation of Fe/S proteins. Could also act as a scaffold/chaperone for damaged Fe/S proteins. The protein is Fe/S biogenesis protein NfuA of Shewanella sediminis (strain HAW-EB3).